Here is a 504-residue protein sequence, read N- to C-terminus: Sphingosine-1-phosphate transporter SPNS2 (504 aa).

A run of 11 helical transmembrane segments spans residues 48–70 (LLRC…LNYM), 94–114 (GLLQ…FGYL), 122–142 (IILS…SFIT), 182–202 (VMLS…YILG), 214–234 (WALR…LIFV), 269–289 (VFSS…GIWI), 317–337 (LIFG…GAVT), 351–371 (LVCA…FVVA), 375–395 (IVGA…NWAI), 415–435 (FQGF…IGLI), and 460–480 (LCPF…LFFL).

The protein belongs to the major facilitator superfamily. Spinster (TC 2.A.1.49) family.

It is found in the cell membrane. The protein localises to the endosome membrane. The catalysed reaction is sphing-4-enine 1-phosphate(in) = sphing-4-enine 1-phosphate(out). It catalyses the reaction sphinganine 1-phosphate(in) = sphinganine 1-phosphate(out). Its function is as follows. Lipid transporter that specifically mediates export of sphingosine-1-phosphate (sphing-4-enine 1-phosphate, S1P) and sphinganine-1-phosphate, which play critical roles in regulating heart development. Mediates the export of S1P from cells in the extraembryonic yolk syncytial layer (YSL), thereby regulating myocardial precursor migration. The chain is Sphingosine-1-phosphate transporter SPNS2 from Danio rerio (Zebrafish).